We begin with the raw amino-acid sequence, 105 residues long: Small ribosomal subunit protein uS10 (105 aa).

It belongs to the universal ribosomal protein uS10 family. In terms of assembly, part of the 30S ribosomal subunit.

In terms of biological role, involved in the binding of tRNA to the ribosomes. This Anaplasma phagocytophilum (strain HZ) protein is Small ribosomal subunit protein uS10.